We begin with the raw amino-acid sequence, 556 residues long: Protein F37C4.5 (556 aa).

Position 2 is an N-acetylalanine (A2).

This chain is Protein F37C4.5, found in Caenorhabditis elegans.